Here is a 129-residue protein sequence, read N- to C-terminus: Small ribosomal subunit protein uS11 (129 aa).

The protein belongs to the universal ribosomal protein uS11 family. As to quaternary structure, part of the 30S ribosomal subunit. Interacts with proteins S7 and S18. Binds to IF-3.

Its function is as follows. Located on the platform of the 30S subunit, it bridges several disparate RNA helices of the 16S rRNA. Forms part of the Shine-Dalgarno cleft in the 70S ribosome. This chain is Small ribosomal subunit protein uS11, found in Psychrobacter arcticus (strain DSM 17307 / VKM B-2377 / 273-4).